Consider the following 375-residue polypeptide: MAQLCVALVAGEASGDILGSGLMRALKARHPDVRFIGVGGPLMEAEGLQSYFPMERLAVMGLVEVLGRLRELLKRRKLLIQTLIEEKPDVFIGIDAPDFTLNIELKLRQAGIKTVHYVSPSVWAWRQKRVLKIREGCDLMLTLLPFEARFYEEQGVPVRFVGHPLADTIPLEADRPAARAALGLGEGPVVALMPGSRGGEVGRLGALFLDAAERLSQQVPGVRFVLPCANATRRAQIEQMLEGRQLPLTLLDGQSHQALAACDAVLIASGTATLEALLYKRPMVVAYRLAPLTFWILKRLVKSPYVSLPNLLAQRELVPELLQDDATSEALANTLAPLVRDGSQQTERFDEIHRTLRRDASNQAAEAVLALLKDR.

It belongs to the LpxB family.

The catalysed reaction is a lipid X + a UDP-2-N,3-O-bis[(3R)-3-hydroxyacyl]-alpha-D-glucosamine = a lipid A disaccharide + UDP + H(+). It functions in the pathway bacterial outer membrane biogenesis; LPS lipid A biosynthesis. Functionally, condensation of UDP-2,3-diacylglucosamine and 2,3-diacylglucosamine-1-phosphate to form lipid A disaccharide, a precursor of lipid A, a phosphorylated glycolipid that anchors the lipopolysaccharide to the outer membrane of the cell. This Pseudomonas putida (strain ATCC 47054 / DSM 6125 / CFBP 8728 / NCIMB 11950 / KT2440) protein is Lipid-A-disaccharide synthase.